Reading from the N-terminus, the 531-residue chain is PHD finger protein 21B (531 aa).

Disordered stretches follow at residues 79–99 (PDSL…PTFQ), 184–222 (SADN…SLSP), 238–277 (VQTQ…ENPE), and 295–314 (EIQS…PAYS). A compositionally biased stretch (basic and acidic residues) spans 265–277 (KKEDRPPTQENPE). The PHD-type zinc finger occupies 352–399 (DEHCAACKRGANLQPCGTCPGAYHLSCLEPPLKTAPKGVWVCPRCQQK). Positions 423–465 (KTVKEEEKQKLLQRGSELQNEHQQLEERDRRLASAVQKCLELK) form a coiled coil. The tract at residues 507-531 (LLAGPWTKPSVAATHPTVQHPQGHN) is disordered. The segment covering 522 to 531 (PTVQHPQGHN) has biased composition (polar residues).

The sequence is that of PHD finger protein 21B (PHF21B) from Homo sapiens (Human).